Here is a 117-residue protein sequence, read N- to C-terminus: Toxin CSTX-8 (117 aa).

Residues 1 to 20 (MKVLVICAVLFLAIFSNSSA) form the signal peptide. A propeptide spanning residues 21–47 (ETEDDFLEDESFQADDVIPFLASEQVR) is cleaved from the precursor. Intrachain disulfides connect C50–C65, C57–C74, C64–C95, and C76–C93. Positions 82–87 (RSETDR) are excised as a propeptide. T116 carries the threonine amide modification.

This sequence belongs to the neurotoxin 19 (CSTX) family. 12 subfamily. Heterodimer of A and B chains; disulfide-linked. Interacts with CSTX-1 (AC P81694), and with CSTX-9 (AC P58604). Expressed by the venom gland.

It localises to the secreted. Its subcellular location is the target cell membrane. Its function is as follows. Synergistic toxin that induces or increases a cytolytic effect when combined with CSTX-1 (AC P81694) or CSTX-9 (AC P58604). When alone, has a weak insecticidal activity, with an unknown molecular target. The polypeptide is Toxin CSTX-8 (Cupiennius salei (American wandering spider)).